The sequence spans 559 residues: Acetolactate synthase, catabolic (559 aa).

FAD-binding positions include arginine 159, 263 to 284 (FNNQAGDRLLRQADLIICIGYS), and 304 to 323 (DVLPAYEERNYVPDIELVGD). Aspartate 447 provides a ligand contact to Mg(2+).

The protein belongs to the TPP enzyme family. Homodimer.

The enzyme catalyses 2 pyruvate + H(+) = (2S)-2-acetolactate + CO2. It functions in the pathway polyol metabolism; (R,R)-butane-2,3-diol biosynthesis; (R,R)-butane-2,3-diol from pyruvate: step 1/3. The polypeptide is Acetolactate synthase, catabolic (budB) (Raoultella terrigena (Klebsiella terrigena)).